Reading from the N-terminus, the 541-residue chain is FAD-linked oxidoreductase pynB (541 aa).

Positions 1–20 are cleaved as a signal peptide; it reads MRLSARGFVWSALLACTASA. Residues asparagine 30, asparagine 57, asparagine 117, asparagine 131, asparagine 158, asparagine 253, asparagine 306, asparagine 343, asparagine 430, and asparagine 461 are each glycosylated (N-linked (GlcNAc...) asparagine). Positions 71 to 242 constitute an FAD-binding PCMH-type domain; it reads FNEFPALIAY…VDFDLQLMQF (172 aa).

Belongs to the oxygen-dependent FAD-linked oxidoreductase family. FAD serves as cofactor.

It participates in secondary metabolite biosynthesis. In terms of biological role, FAD-linked oxidoreductase; part of the gene cluster that mediates the biosynthesis of pyranonigrins, a family of antioxidative compounds. The first step of pyranonigrins biosynthesis is performed by the hybrid PKS-NRPS synthetase that condenses 6 malonyl-CoA units to an acetyl starter unit, to form a 1,3,5-trioxotetradecane-6,8-dienyl-ACP. The enoyl reductase (ER) domain of pynA is likely to be functional during the first two rounds of polyketide chain extension, to generate the saturated C-C bonds of the alkyl side chain. PynA subsequently forms the amide bond between the acyl chain and L-serine. Although pynA has a terminal reductase domain, it appears to require the thioesterase pynI for the release of the straight-chain intermediate from pynA via the formation of a tetramic acid pyranonigrin J. The methyltransferase pynC then coverts pyranonigrin J to pyranonigrin I via N-methylation. The FAD-dependent monooxygenase pynG catalyzes an epoxidation-mediated cyclization to form the dihydro-gamma-pyrone moiety, followed by pynD-catalyzed oxidation of the alcohol to the ketone and enolization to yield the characteristic tetramic acid-fused gamma-pyrone core of pyranonigrin H. Pyranonigrin H is substrate of pynH for dehydration-mediated exo-methylene formation from the serine side chain to produce pyranonigrin E, before the oxidase pynE reduces the exo-methylene of pyranonigrin E into a pendant methyl to form pyranonigrin G. The FAD-linked oxidoreductase pynB performs the reverse reaction and converts pyranonigrin G back to pyranonigrin E. This chain is FAD-linked oxidoreductase pynB, found in Aspergillus niger (strain ATCC MYA-4892 / CBS 513.88 / FGSC A1513).